The primary structure comprises 186 residues: Alkyl hydroperoxide reductase AhpD (186 aa).

The active-site Proton donor is the cysteine 132. Cysteine 132 and cysteine 135 are joined by a disulfide. Catalysis depends on cysteine 135, which acts as the Cysteine sulfenic acid (-SOH) intermediate.

Belongs to the AhpD family.

It catalyses the reaction N(6)-[(R)-dihydrolipoyl]-L-lysyl-[lipoyl-carrier protein] + a hydroperoxide = N(6)-[(R)-lipoyl]-L-lysyl-[lipoyl-carrier protein] + an alcohol + H2O. Antioxidant protein with alkyl hydroperoxidase activity. Required for the reduction of the AhpC active site cysteine residues and for the regeneration of the AhpC enzyme activity. This chain is Alkyl hydroperoxide reductase AhpD, found in Anaeromyxobacter dehalogenans (strain 2CP-C).